The sequence spans 162 residues: MAWGLPCHQNTAGANPHLFLGCYSTSSLQGLEYGGQRGDAHGKPGVLHGELEPHDHTSRLERHDLHSQLPTSVQVRHHWWEGALDLAKKRQQQTSINVFTTIKQGSRCDRWMVLGAISLLYNQEEAPDDRPLRARREVRSQHLSWAFPGTAGPGLVCAGDSQ.

This is an uncharacterized protein from Homo sapiens (Human).